The sequence spans 356 residues: MNKLIEREKTVYYKEKPDPSSLGFGQYFTDYMFVMDYEEGIGWHHPRIAPYAPLTLDPSSSVFHYGQAVFEGLKAYRTDDGRVLLFRPDQNIKRLNRSCERMSMPPLDEELVLEALTQLVELEKDWVPKEKGTSLYIRPFVIATEPSLGVKASRSYTFMIVLSPVGSYYGDDQLKPVRIYVEDEYVRAVNGGVGFAKTAGNYAASLQAQRKANELGYDQVLWLDAIEKKYVEEVGSMNIFFVINGEAVTPALSGSILSGVTRASAIELIRSWGIPVREERISIDEVYAASARGELTEVFGTGTAAVVTPVGELNIHGKTVIVGDGQIGDLSKKLYETITDIQLGKVKGPFNWTVEV.

Position 197 is an N6-(pyridoxal phosphate)lysine (Lys-197).

Belongs to the class-IV pyridoxal-phosphate-dependent aminotransferase family. Requires pyridoxal 5'-phosphate as cofactor.

The enzyme catalyses L-leucine + 2-oxoglutarate = 4-methyl-2-oxopentanoate + L-glutamate. It carries out the reaction L-isoleucine + 2-oxoglutarate = (S)-3-methyl-2-oxopentanoate + L-glutamate. It catalyses the reaction L-valine + 2-oxoglutarate = 3-methyl-2-oxobutanoate + L-glutamate. The protein operates within amino-acid biosynthesis; L-isoleucine biosynthesis; L-isoleucine from 2-oxobutanoate: step 4/4. Its pathway is amino-acid biosynthesis; L-leucine biosynthesis; L-leucine from 3-methyl-2-oxobutanoate: step 4/4. It participates in amino-acid biosynthesis; L-valine biosynthesis; L-valine from pyruvate: step 4/4. With respect to regulation, inhibited by canaline. In terms of biological role, transaminates branched-chain amino acids and ketoglutarate. Involved in the final step of the methionine regeneration pathway, where ketomethiobutyrate (KMTB) is converted to methionine via a transamination. The amino donor preference is isoleucine, leucine, valine, phenylalanine, and tyrosine. The sequence is that of Branched-chain-amino-acid transaminase 1 (ilvE) from Bacillus subtilis (strain 168).